A 318-amino-acid chain; its full sequence is NADH-ubiquinone oxidoreductase chain 1 (318 aa).

The next 8 helical transmembrane spans lie at 2 to 22 (FLTN…FLTL), 70 to 90 (MFLM…IPLP), 102 to 122 (LLFM…SGWA), 147 to 167 (AIIL…TLII), 171 to 191 (YMWL…STLA), 222 to 242 (LFFL…TILF), 253 to 273 (ELYT…FLWI), and 294 to 314 (LPLT…TAAI).

Belongs to the complex I subunit 1 family.

Its subcellular location is the mitochondrion inner membrane. The catalysed reaction is a ubiquinone + NADH + 5 H(+)(in) = a ubiquinol + NAD(+) + 4 H(+)(out). Core subunit of the mitochondrial membrane respiratory chain NADH dehydrogenase (Complex I) that is believed to belong to the minimal assembly required for catalysis. Complex I functions in the transfer of electrons from NADH to the respiratory chain. The immediate electron acceptor for the enzyme is believed to be ubiquinone. This chain is NADH-ubiquinone oxidoreductase chain 1 (MT-ND1), found in Diaemus youngi (White-winged vampire bat).